A 505-amino-acid chain; its full sequence is Aspartyl/glutamyl-tRNA(Asn/Gln) amidotransferase subunit B (505 aa).

The protein belongs to the GatB/GatE family. GatB subfamily. In terms of assembly, heterotrimer of A, B and C subunits.

The enzyme catalyses L-glutamyl-tRNA(Gln) + L-glutamine + ATP + H2O = L-glutaminyl-tRNA(Gln) + L-glutamate + ADP + phosphate + H(+). It catalyses the reaction L-aspartyl-tRNA(Asn) + L-glutamine + ATP + H2O = L-asparaginyl-tRNA(Asn) + L-glutamate + ADP + phosphate + 2 H(+). Its function is as follows. Allows the formation of correctly charged Asn-tRNA(Asn) or Gln-tRNA(Gln) through the transamidation of misacylated Asp-tRNA(Asn) or Glu-tRNA(Gln) in organisms which lack either or both of asparaginyl-tRNA or glutaminyl-tRNA synthetases. The reaction takes place in the presence of glutamine and ATP through an activated phospho-Asp-tRNA(Asn) or phospho-Glu-tRNA(Gln). This Haloarcula marismortui (strain ATCC 43049 / DSM 3752 / JCM 8966 / VKM B-1809) (Halobacterium marismortui) protein is Aspartyl/glutamyl-tRNA(Asn/Gln) amidotransferase subunit B.